The sequence spans 382 residues: Na(+)/H(+) antiporter NhaA 2 (382 aa).

A run of 11 helical transmembrane segments spans residues Met-7–Leu-27, Leu-58–Leu-78, Ser-94–Ile-114, Gly-124–Gly-144, Leu-153–Phe-173, Leu-178–Tyr-198, Tyr-199–Leu-219, Asn-255–Ile-275, Ile-291–Ile-311, Phe-327–Leu-347, and Leu-361–Val-381.

The protein belongs to the NhaA Na(+)/H(+) (TC 2.A.33) antiporter family.

It localises to the cell inner membrane. It carries out the reaction Na(+)(in) + 2 H(+)(out) = Na(+)(out) + 2 H(+)(in). In terms of biological role, na(+)/H(+) antiporter that extrudes sodium in exchange for external protons. The chain is Na(+)/H(+) antiporter NhaA 2 from Campylobacter jejuni subsp. doylei (strain ATCC BAA-1458 / RM4099 / 269.97).